Reading from the N-terminus, the 84-residue chain is U4-theraphotoxin-Hhn1ac (84 aa).

An N-terminal signal peptide occupies residues 1–22 (MKVTLIAILTCAAVLVLHTTAA). The propeptide occupies 23–47 (EELEESQLMEVGMPDTELAAVDEER). Intrachain disulfides connect Cys51–Cys65, Cys55–Cys76, and Cys70–Cys81.

Belongs to the neurotoxin 12 (Hwtx-2) family. 02 (Hwtx-2) subfamily. In terms of tissue distribution, expressed by the venom gland.

It localises to the secreted. Functionally, postsynaptic neurotoxin. The polypeptide is U4-theraphotoxin-Hhn1ac (Cyriopagopus hainanus (Chinese bird spider)).